The chain runs to 410 residues: Protein king tubby 1 (410 aa).

2 disordered regions span residues 44-109 and 121-159; these read QFMM…STRH and ISPA…EGDV. A compositionally biased stretch (polar residues) spans 47–72; the sequence is MSPNNPDQILTSTGNASVTTTPTSPY. Over residues 132-143 the composition is skewed to basic and acidic residues; that stretch reads SHHDSSSGKSVE.

It belongs to the TUB family.

The protein resides in the cytoplasm. The protein localises to the nucleus. This chain is Protein king tubby 1 (king-tubby1), found in Aedes aegypti (Yellowfever mosquito).